The sequence spans 209 residues: Uracil phosphoribosyltransferase (209 aa).

5-phospho-alpha-D-ribose 1-diphosphate is bound by residues Arg-77, Arg-102, and 129–137 (DPMLATGVS). Uracil contacts are provided by residues Ile-192 and 197–199 (GDA). Asp-198 lines the 5-phospho-alpha-D-ribose 1-diphosphate pocket.

The protein belongs to the UPRTase family. Requires Mg(2+) as cofactor.

It catalyses the reaction UMP + diphosphate = 5-phospho-alpha-D-ribose 1-diphosphate + uracil. Its pathway is pyrimidine metabolism; UMP biosynthesis via salvage pathway; UMP from uracil: step 1/1. Its activity is regulated as follows. Allosterically activated by GTP. In terms of biological role, catalyzes the conversion of uracil and 5-phospho-alpha-D-ribose 1-diphosphate (PRPP) to UMP and diphosphate. This Metamycoplasma arthritidis (strain 158L3-1) (Mycoplasma arthritidis) protein is Uracil phosphoribosyltransferase.